Here is a 660-residue protein sequence, read N- to C-terminus: MKAIVFAYHDIGCAGLKALTDAGYDIQAVFTHTDDPGENNFFSSVARVGAELELPVYAPEDVNHPLWIERIREMQPDIIFSFYYRNMLSEELLSLAPKGGFNLHGSLLPHYRGRAPVNWALVNGETETGATLHKMVKRPDAGDIVGQHKVAIAANDTALTLHKKVLEAAQALLKEQLPKLKNGTASFTRQNEAEASYFGRRTAADGEILWHKSAQEINNLVRAVTEPYPGAFSYLGQRKLIVWRARVLDTRHDKQPGTVLSTSPLIIACGEGALEIVAGQNDVGLYVQGSRLAQEMGIVTDVRLAAKPNAVMKRRTRVLILGVNGFIGNHLTERLLRDDRYDIYGLDIGSDAISRFLGNPRFHFVEGDISIHSEWIEYHIKKCDVILPLVAIATPIEYTRNPLRVFELDFEENLKIVRDCVKYNKRIIFPSTSEVYGMCDDKEFDEDHSRLIVGPINKQRWIYSVSKQLLDRVIWAYGAKEGLKFTLFRPFNWMGPRLDNLDAARIGSSRAITQLILNLVEGSPIKLMDGGAQKRCFTDINDGIEALFRIIENRDGLCDGQIVNIGNPTNEASIRELAEMLLESFNNHPLRDRFPPFAGFKDVESSSYYGKGYQDVEHRTPSIKNARRLLDWQPTIAMQQTVADTLDYFLRTTVQEGDGA.

Residues 1 to 304 (MKAIVFAYHD…EMGIVTDVRL (304 aa)) are formyltransferase ArnAFT. His-104 functions as the Proton donor; for formyltransferase activity in the catalytic mechanism. Residues Arg-114 and 136–140 (VKRPD) contribute to the (6R)-10-formyltetrahydrofolate site. The tract at residues 314-660 (RRTRVLILGV…RTTVQEGDGA (347 aa)) is dehydrogenase ArnADH. Residues Asp-347 and 368-369 (DI) contribute to the NAD(+) site. Residues Ala-393, Tyr-398, and 432–433 (TS) contribute to the UDP-alpha-D-glucuronate site. The Proton acceptor; for decarboxylase activity role is filled by Glu-434. Residues Arg-460, Asn-492, 526–535 (KLMDGGAQKR), and Tyr-613 each bind UDP-alpha-D-glucuronate. Arg-619 acts as the Proton donor; for decarboxylase activity in catalysis.

It in the N-terminal section; belongs to the Fmt family. UDP-L-Ara4N formyltransferase subfamily. This sequence in the C-terminal section; belongs to the NAD(P)-dependent epimerase/dehydratase family. UDP-glucuronic acid decarboxylase subfamily. In terms of assembly, homohexamer, formed by a dimer of trimers.

It catalyses the reaction UDP-alpha-D-glucuronate + NAD(+) = UDP-beta-L-threo-pentopyranos-4-ulose + CO2 + NADH. It carries out the reaction UDP-4-amino-4-deoxy-beta-L-arabinose + (6R)-10-formyltetrahydrofolate = UDP-4-deoxy-4-formamido-beta-L-arabinose + (6S)-5,6,7,8-tetrahydrofolate + H(+). Its pathway is nucleotide-sugar biosynthesis; UDP-4-deoxy-4-formamido-beta-L-arabinose biosynthesis; UDP-4-deoxy-4-formamido-beta-L-arabinose from UDP-alpha-D-glucuronate: step 1/3. The protein operates within nucleotide-sugar biosynthesis; UDP-4-deoxy-4-formamido-beta-L-arabinose biosynthesis; UDP-4-deoxy-4-formamido-beta-L-arabinose from UDP-alpha-D-glucuronate: step 3/3. It functions in the pathway bacterial outer membrane biogenesis; lipopolysaccharide biosynthesis. In terms of biological role, bifunctional enzyme that catalyzes the oxidative decarboxylation of UDP-glucuronic acid (UDP-GlcUA) to UDP-4-keto-arabinose (UDP-Ara4O) and the addition of a formyl group to UDP-4-amino-4-deoxy-L-arabinose (UDP-L-Ara4N) to form UDP-L-4-formamido-arabinose (UDP-L-Ara4FN). The modified arabinose is attached to lipid A and is required for resistance to polymyxin and cationic antimicrobial peptides. This chain is Bifunctional polymyxin resistance protein ArnA, found in Serratia proteamaculans (strain 568).